A 92-amino-acid chain; its full sequence is Small ribosomal subunit protein uS19c (92 aa).

The protein belongs to the universal ribosomal protein uS19 family.

The protein localises to the plastid. It localises to the chloroplast. Its function is as follows. Protein S19 forms a complex with S13 that binds strongly to the 16S ribosomal RNA. The protein is Small ribosomal subunit protein uS19c of Coffea arabica (Arabian coffee).